The primary structure comprises 308 residues: Pseudouridine-5'-phosphate glycosidase (308 aa).

E25 (proton donor) is an active-site residue. K86 and V106 together coordinate substrate. D142 provides a ligand contact to Mn(2+). 144–146 (SAD) lines the substrate pocket. The active-site Nucleophile is the K163.

Belongs to the pseudouridine-5'-phosphate glycosidase family. In terms of assembly, homotrimer. It depends on Mn(2+) as a cofactor.

The enzyme catalyses D-ribose 5-phosphate + uracil = psi-UMP + H2O. Its function is as follows. Catalyzes the reversible cleavage of pseudouridine 5'-phosphate (PsiMP) to ribose 5-phosphate and uracil. Functions biologically in the cleavage direction, as part of a pseudouridine degradation pathway. The sequence is that of Pseudouridine-5'-phosphate glycosidase from Symbiobacterium thermophilum (strain DSM 24528 / JCM 14929 / IAM 14863 / T).